A 724-amino-acid chain; its full sequence is Long-chain-fatty-acid--CoA ligase ACSBG1 (724 aa).

The tract at residues 1–30 is disordered; that stretch reads MPRNSGAGYGCPHGDPSMLDSRETPQESRQ. Residues 20-30 are compositionally biased toward basic and acidic residues; it reads DSRETPQESRQ. 2 positions are modified to phosphoserine: Ser-53 and Ser-56. Residues 282–290, 472–477, Asp-550, and Arg-565 each bind ATP; these read TSGTTGNPK and AGYGLS. At Tyr-658 the chain carries Phosphotyrosine. Lys-701 lines the ATP pocket.

The protein belongs to the ATP-dependent AMP-binding enzyme family. Bubblegum subfamily. In terms of tissue distribution, expressed primarily in brain. Expressed at lower level in testis and adrenal gland. Present in all regions of brain except pituitary.

It localises to the cytoplasm. The protein localises to the cytoplasmic vesicle. Its subcellular location is the microsome. It is found in the endoplasmic reticulum. The protein resides in the cell membrane. The enzyme catalyses a long-chain fatty acid + ATP + CoA = a long-chain fatty acyl-CoA + AMP + diphosphate. The catalysed reaction is (E)-hexadec-2-enoate + ATP + CoA = (2E)-hexadecenoyl-CoA + AMP + diphosphate. It catalyses the reaction hexadecanoate + ATP + CoA = hexadecanoyl-CoA + AMP + diphosphate. In terms of biological role, catalyzes the conversion of fatty acids such as long-chain and very long-chain fatty acids to their active form acyl-CoAs for both synthesis of cellular lipids, and degradation via beta-oxidation. Can activate diverse saturated, monosaturated and polyunsaturated fatty acids. The polypeptide is Long-chain-fatty-acid--CoA ligase ACSBG1 (Homo sapiens (Human)).